Here is a 379-residue protein sequence, read N- to C-terminus: F420-dependent formate dehydrogenase subunit beta (379 aa).

4Fe-4S ferredoxin-type domains lie at 271 to 301 (EKWK…CSLE) and 321 to 351 (IRLS…YIFH). [4Fe-4S] cluster-binding residues include Cys-280, Cys-283, Cys-286, Cys-290, Cys-330, Cys-333, Cys-336, and Cys-340.

The protein belongs to the FrhB family. As to quaternary structure, dimer of an alpha (FdhA) and a beta (FdhB) subunit. [4Fe-4S] cluster serves as cofactor. The cofactor is FAD. Zn(2+) is required as a cofactor.

The enzyme catalyses oxidized coenzyme F420-(gamma-L-Glu)(n) + formate + 2 H(+) = reduced coenzyme F420-(gamma-L-Glu)(n) + CO2. Functionally, catalyzes the oxidation of formate to carbon dioxide, with coenzyme F420 as the electron acceptor. This is F420-dependent formate dehydrogenase subunit beta (fdhB) from Methanocaldococcus jannaschii (strain ATCC 43067 / DSM 2661 / JAL-1 / JCM 10045 / NBRC 100440) (Methanococcus jannaschii).